The primary structure comprises 646 residues: Protein kinase YegI (646 aa).

One can recognise a Protein kinase domain in the interval 13-300 (VTPGRELGKG…KAWVAALDLL (288 aa)). ATP is bound by residues 19–27 (LGKGGEGAV) and K39. The Proton acceptor role is filled by D141.

In terms of processing, autophosphorylated.

Its function is as follows. Probable serine/threonine kinase. The sequence is that of Protein kinase YegI (yegI) from Escherichia coli O157:H7.